We begin with the raw amino-acid sequence, 88 residues long: Putative septation protein SpoVG (88 aa).

Belongs to the SpoVG family.

Functionally, could be involved in septation. In Caldicellulosiruptor saccharolyticus (strain ATCC 43494 / DSM 8903 / Tp8T 6331), this protein is Putative septation protein SpoVG.